The primary structure comprises 341 residues: UDP-3-O-acylglucosamine N-acyltransferase (341 aa).

The active-site Proton acceptor is the His-241.

It belongs to the transferase hexapeptide repeat family. LpxD subfamily. In terms of assembly, homotrimer.

It catalyses the reaction a UDP-3-O-[(3R)-3-hydroxyacyl]-alpha-D-glucosamine + a (3R)-hydroxyacyl-[ACP] = a UDP-2-N,3-O-bis[(3R)-3-hydroxyacyl]-alpha-D-glucosamine + holo-[ACP] + H(+). Its pathway is bacterial outer membrane biogenesis; LPS lipid A biosynthesis. Catalyzes the N-acylation of UDP-3-O-acylglucosamine using 3-hydroxyacyl-ACP as the acyl donor. Is involved in the biosynthesis of lipid A, a phosphorylated glycolipid that anchors the lipopolysaccharide to the outer membrane of the cell. The polypeptide is UDP-3-O-acylglucosamine N-acyltransferase (Saccharophagus degradans (strain 2-40 / ATCC 43961 / DSM 17024)).